Here is a 136-residue protein sequence, read N- to C-terminus: Large ribosomal subunit protein uL16 (136 aa).

The protein belongs to the universal ribosomal protein uL16 family. Part of the 50S ribosomal subunit.

In terms of biological role, binds 23S rRNA and is also seen to make contacts with the A and possibly P site tRNAs. This Alteromonas mediterranea (strain DSM 17117 / CIP 110805 / LMG 28347 / Deep ecotype) protein is Large ribosomal subunit protein uL16.